The sequence spans 323 residues: Aldo-keto reductase family 1 member C1 (323 aa).

NADP(+) contacts are provided by residues 20 to 24 (GFGTY) and aspartate 50. Residue tyrosine 24 coordinates substrate. Tyrosine 55 acts as the Proton donor in catalysis. Histidine 117 is a substrate binding site. Residues 166 to 167 (SN), glutamine 190, and 216 to 222 (YSALGSH) contribute to the NADP(+) site. 2 residues coordinate substrate: histidine 222 and tryptophan 227. 270–280 (KSYNEQRIRQN) serves as a coordination point for NADP(+).

It belongs to the aldo/keto reductase family. Monomer. In terms of tissue distribution, expressed in all tissues tested including liver, prostate, testis, adrenal gland, brain, uterus, mammary gland and keratinocytes. Highest levels found in liver, mammary gland and brain.

It is found in the cytoplasm. Its subcellular location is the cytosol. It catalyses the reaction a 3alpha-hydroxysteroid + NADP(+) = a 3-oxosteroid + NADPH + H(+). The catalysed reaction is a 3alpha-hydroxysteroid + NAD(+) = a 3-oxosteroid + NADH + H(+). The enzyme catalyses (17R,20S)-17,20-dihydroxypregn-4-en-3-one + NADP(+) = 17alpha-hydroxyprogesterone + NADPH + H(+). It carries out the reaction (17R,20S)-17,20-dihydroxypregn-4-en-3-one + NAD(+) = 17alpha-hydroxyprogesterone + NADH + H(+). It catalyses the reaction (20S)-hydroxypregn-4-en-3-one + NADP(+) = progesterone + NADPH + H(+). The catalysed reaction is (20S)-hydroxypregn-4-en-3-one + NAD(+) = progesterone + NADH + H(+). The enzyme catalyses (1R,2R)-1,2-dihydrobenzene-1,2-diol + NADP(+) = catechol + NADPH + H(+). It carries out the reaction (S)-indan-1-ol + NAD(+) = indan-1-one + NADH + H(+). It catalyses the reaction (S)-indan-1-ol + NADP(+) = indan-1-one + NADPH + H(+). The catalysed reaction is 5alpha-androstane-3alpha,17beta-diol + NADP(+) = 17beta-hydroxy-5alpha-androstan-3-one + NADPH + H(+). The enzyme catalyses 5alpha-androstane-3beta,17beta-diol + NADP(+) = 17beta-hydroxy-5alpha-androstan-3-one + NADPH + H(+). It carries out the reaction 5alpha-androstane-3alpha,17beta-diol + NAD(+) = 17beta-hydroxy-5alpha-androstan-3-one + NADH + H(+). It catalyses the reaction 17beta-hydroxy-5alpha-androstan-3-one + NADP(+) = 5alpha-androstan-3,17-dione + NADPH + H(+). The catalysed reaction is androsterone + NADP(+) = 5alpha-androstan-3,17-dione + NADPH + H(+). The enzyme catalyses androsterone + NADPH + H(+) = 5alpha-androstane-3alpha,17beta-diol + NADP(+). It carries out the reaction 5alpha-androstane-3alpha,17beta-diol + NAD(+) = androsterone + NADH + H(+). It catalyses the reaction 17beta-estradiol + NADP(+) = estrone + NADPH + H(+). The catalysed reaction is 17beta-estradiol + NAD(+) = estrone + NADH + H(+). The enzyme catalyses testosterone + NADP(+) = androst-4-ene-3,17-dione + NADPH + H(+). It carries out the reaction 20alpha-hydroxy-5beta-pregnan-3-one + NADP(+) = 5beta-pregnan-3,20-dione + NADPH + H(+). It catalyses the reaction 3beta-hydroxy-5beta-pregnane-20-one + NADP(+) = 5beta-pregnan-3,20-dione + NADPH + H(+). The catalysed reaction is 3beta-hydroxy-5beta-pregnane-20-one + NADPH + H(+) = 3beta,20alpha-dihydroxy-5beta-pregnane + NADP(+). The enzyme catalyses (3beta,5alpha,17beta)-3-hydroxyandrostan-17-yl sulfate + NADP(+) = 5alpha-dihydrotestosterone sulfate + NADPH + H(+). It functions in the pathway steroid metabolism. Inhibited by hexestrol with an IC(50) of 9.5 uM, 1,10-phenanthroline with an IC(50) of 55 uM, 1,7-phenanthroline with an IC(50) of 72 uM, flufenamic acid with an IC(50) of 6.0 uM, indomethacin with an IC(50) of 140 uM, ibuprofen with an IC(50) of 950 uM, lithocholic acid with an IC(50) of 25 uM, ursodeoxycholic acid with an IC(50) of 340 uM and chenodeoxycholic acid with an IC(50) of 570 uM. The oxidation reaction is inhibited by low micromolar concentrations of NADPH. Functionally, cytosolic aldo-keto reductase that catalyzes the NADH and NADPH-dependent reduction of ketosteroids to hydroxysteroids. Most probably acts as a reductase in vivo since the oxidase activity measured in vitro is inhibited by physiological concentrations of NADPH. Displays a broad positional specificity acting on positions 3, 17 and 20 of steroids and regulates the metabolism of hormones like estrogens and androgens. May also reduce conjugated steroids such as 5alpha-dihydrotestosterone sulfate. Displays affinity for bile acids. The protein is Aldo-keto reductase family 1 member C1 (AKR1C1) of Homo sapiens (Human).